The sequence spans 450 residues: RUN domain-containing protein 3B (450 aa).

The 133-residue stretch at 48 to 180 (DDTSAEFINF…IDFSFCLKGE (133 aa)) folds into the RUN domain. A disordered region spans residues 203–225 (DSISSDEEEMRTLGSSGSEAGTP). Residues 291-317 (ISHKLEKEQLEIIILELQDQLTVLKNH) are a coiled coil.

Belongs to the RUNDC3 family.

This Danio rerio (Zebrafish) protein is RUN domain-containing protein 3B (rundc3b).